A 128-amino-acid polypeptide reads, in one-letter code: Protein Wnt-10 (128 aa).

5 disulfides stabilise this stretch: cysteine 3–cysteine 17, cysteine 5–cysteine 12, cysteine 74–cysteine 105, cysteine 90–cysteine 100, and cysteine 127–cysteine 128. The O-palmitoleoyl serine; by PORCN moiety is linked to residue serine 9. N-linked (GlcNAc...) asparagine glycosylation occurs at asparagine 91.

Belongs to the Wnt family. In terms of processing, palmitoleoylation is required for efficient binding to frizzled receptors. Depalmitoleoylation leads to Wnt signaling pathway inhibition. In embryo, in dorsal hindbrain; in adults, in brain.

It is found in the secreted. Its subcellular location is the extracellular space. It localises to the extracellular matrix. Ligand for members of the frizzled family of seven transmembrane receptors. Probable developmental protein. May be a signaling molecule which affects the development of discrete regions of tissues. Is likely to signal over only few cell diameters. The chain is Protein Wnt-10 (wnt10) from Xenopus laevis (African clawed frog).